Here is a 71-residue protein sequence, read N- to C-terminus: MGSFSLLHWLVVLVIVLLVFGTKRLANGAKDIGSAIKEFKKSLREDDKPTDQLGSTSQSTASGPQQDHGKH.

A helical transmembrane segment spans residues 1–21 (MGSFSLLHWLVVLVIVLLVFG). Residues 43–71 (LREDDKPTDQLGSTSQSTASGPQQDHGKH) form a disordered region. The segment covering 52-65 (QLGSTSQSTASGPQ) has biased composition (polar residues).

This sequence belongs to the TatA/E family. In terms of assembly, the Tat system comprises two distinct complexes: a TatABC complex, containing multiple copies of TatA, TatB and TatC subunits, and a separate TatA complex, containing only TatA subunits. Substrates initially bind to the TatABC complex, which probably triggers association of the separate TatA complex to form the active translocon.

The protein localises to the cell inner membrane. Part of the twin-arginine translocation (Tat) system that transports large folded proteins containing a characteristic twin-arginine motif in their signal peptide across membranes. TatA could form the protein-conducting channel of the Tat system. This chain is Sec-independent protein translocase protein TatA, found in Xylella fastidiosa (strain 9a5c).